The chain runs to 494 residues: NAD(P)H-quinone oxidoreductase subunit 2 B, chloroplastic (494 aa).

A run of 14 helical transmembrane segments spans residues 13–33, 39–59, 81–101, 107–127, 131–151, 166–186, 211–231, 243–263, 277–297, 305–325, 336–356, 378–398, 411–433, and 468–488; these read SILPECILILSLIVTIIIDLI, TPWLYLVSLTALVTSVVILLF, IFRLFILICSLLCIPLSIDYI, ALTEFLLFILTATLGGMFLCC, LVTIFVALECLGLSSYLLSGY, LLMGGASSSILVYGFSLLYGL, MFISMIFLLVGVGFKLSLVPF, PTPVVAFFSVTSKVAALALAT, WHLLLEILAISSMILGNFIAV, MLAYSSISQIGYIIIGVIAAE, YMLIYIFMNLGTFACITLFGL, LSLVLCLLSLGGIPPLSGFFG, LYFLVPIALSTSVISMYYYLKII, and MIICVVASTLPGILINPIIAI.

The protein belongs to the complex I subunit 2 family. In terms of assembly, NDH is composed of at least 16 different subunits, 5 of which are encoded in the nucleus.

It localises to the plastid. It is found in the chloroplast thylakoid membrane. The catalysed reaction is a plastoquinone + NADH + (n+1) H(+)(in) = a plastoquinol + NAD(+) + n H(+)(out). The enzyme catalyses a plastoquinone + NADPH + (n+1) H(+)(in) = a plastoquinol + NADP(+) + n H(+)(out). In terms of biological role, NDH shuttles electrons from NAD(P)H:plastoquinone, via FMN and iron-sulfur (Fe-S) centers, to quinones in the photosynthetic chain and possibly in a chloroplast respiratory chain. The immediate electron acceptor for the enzyme in this species is believed to be plastoquinone. Couples the redox reaction to proton translocation, and thus conserves the redox energy in a proton gradient. This is NAD(P)H-quinone oxidoreductase subunit 2 B, chloroplastic from Angiopteris evecta (Mule's foot fern).